Consider the following 632-residue polypeptide: Sodium- and chloride-dependent GABA transporter 3 (632 aa).

Residues 1-41 are disordered; that stretch reads MTAEKALPLGNGKAAEEARESEAPGGGCSSGGAAPARHPRV. At 1–58 the chain is on the cytoplasmic side; the sequence is MTAEKALPLGNGKAAEEARESEAPGGGCSSGGAAPARHPRVKRDKAVHERGHWNNKVE. Phosphoserine is present on Ser21. The next 3 helical transmembrane spans lie at 59 to 79, 87 to 106, and 131 to 151; these read FVLSVAGEIIGLGNVWRFPYL, AFLIPYVVFFICCGIPVFFL, and GIGYATQVIEAHLNVYYIIIL. The Extracellular portion of the chain corresponds to 152–225; that stretch reads AWAIFYLSNC…DGIEHIGNLR (74 aa). Residues Asn187, Asn190, and Asn198 are each glycosylated (N-linked (GlcNAc...) asparagine). A run of 9 helical transmembrane segments spans residues 226 to 244, 253 to 270, 306 to 323, 335 to 356, 389 to 408, 438 to 456, 473 to 493, 514 to 533, and 553 to 571; these read WELALCLLAAWTICYFCIW, VVYVTATFPYIMLLILLI, IFFSYAICLGCLTALGSY, IMLCCLNSGTSFVAGFAIFSVL, MPLSPLWATLFFMMLIFLGL, LLILALSVISYFLGLVMLT, GMCLLFVAIFECICIGWVYGS, WCWMIMTPGICAGIFIFFLI, and IGWLMALSSMLCIPLWICI. The Cytoplasmic portion of the chain corresponds to 572-632; sequence TVWKTEGTLP…AAITEKETHF (61 aa).

It belongs to the sodium:neurotransmitter symporter (SNF) (TC 2.A.22) family. SLC6A11 subfamily. As to expression, widespread distribution in the brain.

It is found in the cell membrane. The enzyme catalyses 4-aminobutanoate(out) + chloride(out) + 2 Na(+)(out) = 4-aminobutanoate(in) + chloride(in) + 2 Na(+)(in). The catalysed reaction is taurine(out) + chloride(out) + 2 Na(+)(out) = taurine(in) + chloride(in) + 2 Na(+)(in). It catalyses the reaction beta-alanine(out) + chloride(out) + 2 Na(+)(out) = beta-alanine(in) + chloride(in) + 2 Na(+)(in). It carries out the reaction hypotaurine(out) + chloride(out) + 2 Na(+)(out) = hypotaurine(in) + chloride(in) + 2 Na(+)(in). Its activity is regulated as follows. GABA transport is inhibited by SNAP-5114. Mediates sodium- and chloride-dependent transport of gamma-aminobutyric acid (GABA). Can also mediate transport of beta-alanine and to a lower extent that of taurine and hypotaurine. The protein is Sodium- and chloride-dependent GABA transporter 3 (SLC6A11) of Homo sapiens (Human).